Consider the following 133-residue polypeptide: S-adenosylmethionine decarboxylase proenzyme (133 aa).

S64 serves as the catalytic Schiff-base intermediate with substrate; via pyruvic acid. Pyruvic acid (Ser); by autocatalysis is present on S64. H69 serves as the catalytic Proton acceptor; for processing activity. C84 functions as the Proton donor; for catalytic activity in the catalytic mechanism.

It belongs to the prokaryotic AdoMetDC family. Type 1 subfamily. Heterotetramer of two alpha and two beta chains arranged as a dimer of alpha/beta heterodimers. It depends on pyruvate as a cofactor. In terms of processing, is synthesized initially as an inactive proenzyme. Formation of the active enzyme involves a self-maturation process in which the active site pyruvoyl group is generated from an internal serine residue via an autocatalytic post-translational modification. Two non-identical subunits are generated from the proenzyme in this reaction, and the pyruvate is formed at the N-terminus of the alpha chain, which is derived from the carboxyl end of the proenzyme. The post-translation cleavage follows an unusual pathway, termed non-hydrolytic serinolysis, in which the side chain hydroxyl group of the serine supplies its oxygen atom to form the C-terminus of the beta chain, while the remainder of the serine residue undergoes an oxidative deamination to produce ammonia and the pyruvoyl group blocking the N-terminus of the alpha chain.

It carries out the reaction S-adenosyl-L-methionine + H(+) = S-adenosyl 3-(methylsulfanyl)propylamine + CO2. It functions in the pathway amine and polyamine biosynthesis; S-adenosylmethioninamine biosynthesis; S-adenosylmethioninamine from S-adenosyl-L-methionine: step 1/1. Catalyzes the decarboxylation of S-adenosylmethionine to S-adenosylmethioninamine (dcAdoMet), the propylamine donor required for the synthesis of the polyamines spermine and spermidine from the diamine putrescine. This Sulfurihydrogenibium sp. (strain YO3AOP1) protein is S-adenosylmethionine decarboxylase proenzyme.